We begin with the raw amino-acid sequence, 439 residues long: Niacin transporter NiaP (439 aa).

A run of 12 helical transmembrane segments spans residues 20–40, 57–77, 84–104, 108–128, 143–163, 169–189, 253–273, 288–308, 316–336, 338–358, 374–394, and 407–427; these read LWVVGLGWMFDALDTGIIAFI, WIVSIGFIGMALGAVFSGGLA, TVFATTLLIYSLATAACAFAP, WLLAFRFIVGLGLGGQLPVAV, FIVLLESFWGLGWLVAALVSY, FGWHIAFLIGGLPAIYVYVII, LMLWLVWFGIVFSYYGIFTWL, FEYVLIMILAQLPGYISAAWL, ATLAGFIGACAISAYFFGQAD, VFNIMVWGCLLSFFNLGAWGV, FGAGWASAVGRMGGIAAPIVV, and VFMMFTLVLLAVAAVIVILGE.

This sequence belongs to the major facilitator superfamily. Sugar transporter (TC 2.A.1.1) family.

The protein localises to the cell inner membrane. Functionally, functions as a high-affinity transporter of niacin (nicotinamide or nicotinate). Probably substantially contributes to niacin transport when its concentration in the medium is very low. The polypeptide is Niacin transporter NiaP (Acinetobacter baylyi (strain ATCC 33305 / BD413 / ADP1)).